Reading from the N-terminus, the 159-residue chain is Cyclic pyranopterin monophosphate synthase (159 aa).

Residues Leu-75–His-77 and Met-113–Glu-114 contribute to the substrate site. Residue Asp-128 is part of the active site.

The protein belongs to the MoaC family. In terms of assembly, homohexamer; trimer of dimers.

The catalysed reaction is (8S)-3',8-cyclo-7,8-dihydroguanosine 5'-triphosphate = cyclic pyranopterin phosphate + diphosphate. It participates in cofactor biosynthesis; molybdopterin biosynthesis. In terms of biological role, catalyzes the conversion of (8S)-3',8-cyclo-7,8-dihydroguanosine 5'-triphosphate to cyclic pyranopterin monophosphate (cPMP). The protein is Cyclic pyranopterin monophosphate synthase of Heliobacterium modesticaldum (strain ATCC 51547 / Ice1).